We begin with the raw amino-acid sequence, 315 residues long: Probable branched-chain amino acid transport permease protein LivH (315 aa).

9 helical membrane passes run 14–34, 49–69, 70–90, 100–120, 150–170, 201–221, 224–244, 250–270, and 283–303; these read ILEGAIIYSNLLVLLALGLTL, YAIVGSYVALTLLKLFGICPY, LSLPVLFVVGAIVGLITYLAL, VEILMIATLAIDLILLGVIGA, GILFVSTFVVILLLIGLYLLL, LFSWILSGALAGVAGGLLPFM, IVPATGDLIIISIFAASIVGG, GALIGGYIIGISESLITYYLA, and VISLIIMIATLLIAPYGITGV.

The protein belongs to the binding-protein-dependent transport system permease family. LivHM subfamily.

The protein resides in the cell membrane. Functionally, part of the binding-protein-dependent transport system for branched-chain amino acids. Probably responsible for the translocation of the substrates across the membrane. The sequence is that of Probable branched-chain amino acid transport permease protein LivH (livH) from Methanocaldococcus jannaschii (strain ATCC 43067 / DSM 2661 / JAL-1 / JCM 10045 / NBRC 100440) (Methanococcus jannaschii).